A 210-amino-acid polypeptide reads, in one-letter code: Protein HEADING DATE REPRESSOR 1 (210 aa).

A disordered region spans residues Met-1–Leu-97. Positions Gln-29–Ala-49 form a coiled coil. Basic and acidic residues-rich tracts occupy residues Ala-45–Asp-54 and Asp-62–Leu-79. Residues Arg-129 to Gln-184 adopt a coiled-coil conformation.

As to quaternary structure, interacts with OSK3 and OSK4. Mostly expressed in leaves, seedlings and floral organs, and, to a lower extent, in panicle, roots, nodes, internodes, leaf joint and sheath.

The protein resides in the nucleus. Regulates flowering time via a photoperiod-dependent pathway. Suppressor of flowering that upregulates HD1 and down-regulates EHD1 in long days (LD), thus leading to the down-regulation of HD3A and RFT1. Triggers OSK4-mediated HD1 phosphorylation. The polypeptide is Protein HEADING DATE REPRESSOR 1 (Oryza sativa subsp. japonica (Rice)).